The following is a 153-amino-acid chain: Ergochrome gene cluster protein CPUR_05425 (153 aa).

It participates in pigment biosynthesis. Its function is as follows. Part of the ergochrome gene cluster responsible for the typical purple-black color of the ergot sclerotia. The ergochrome gene cluster produces several ergot pigments including the yellow ergochrome secalonic acid and its derivatives, as well as the red anthraquinones endocrocin and clavorubin. The pathway begins with the synthesis of atrochrysone thioester by the polyketide synthase (PKS) CPUR_05437. The atrochrysone carboxyl ACP thioesterase CPUR_05436 then breaks the thioester bond and releases the atrochrysone carboxylic acid from CPUR_05437. The atrochrysone carboxylic acid is then converted to atrochrysone which is further transformed into emodin anthrone. The next step is performed by the anthrone oxygenase CPUR_05434 that catalyzes the oxidation of emodinanthrone to emodin. Emodin is further modified to yield monodictyphenone via several steps involving CPUR_05427, CPUR_05428, CPUR_05429 and CPUR_05430. The short chain dehydrogenase/reductase CPUR_05418 then catalyzes the C-5 ketoreduction to give the xanthone skeleton of the monomeric units. Ergochromes formation requires further dimerization steps of different xanthone units, probably catalyzed by the cytochrome P450 monooxygenase CPUR_05419. CPUR_05425, CPUR_05426 and CPUR_05431 are unique to Claviceps, thus it is likely that they are involved in further modification of xanthone units or in their dimerization. The yellow ergochromes and the red anthraquinone pigments endocrocin and clavorubin are products from the same PKS derived precursors and the latter are likely shunt products in the pathway of xanthone biosynthesis. It is proposed that atrochrysone carboxylic acid released from the PKS CPUR_05437 can also be converted to endocrocin anthrone which is further oxidized into endocrocin by CPUR_05435. Endocrocin could be then modified to clavorubin, possibly by CPUR_05423 and CPUR_05431. Clavorubin is the principal anthraquinone metabolite produced by the cluster with a much higher yield compared to endocrocin. This is Ergochrome gene cluster protein CPUR_05425 from Claviceps purpurea (strain 20.1) (Ergot fungus).